Here is a 293-residue protein sequence, read N- to C-terminus: uncharacterized protein (293 aa).

2 disordered regions span residues 1–95 (MFLR…KDKA) and 268–293 (EETADWESEGQGKEAKEQTEGPGRAL). Phosphoserine is present on residues S34, S35, and S89. Basic and acidic residues-rich tracts occupy residues 85–95 (KRMDSLKKDKA) and 277–286 (GQGKEAKEQT).

This is an uncharacterized protein from Rattus norvegicus (Rat).